A 339-amino-acid polypeptide reads, in one-letter code: MREEALQAIQEAPDLPALQAVKTRYLGKSGLVTRELGALGKLPPEERKRRGAELNALRQAIDAALTEREAVLKRAALDARLASEAIDVTLPGLSLPAGGLHPISRVYDDLIRIFERMGYAVVEGPEVEDEHHNFEALNVPWYHPARDLQDTFWLEDGRLLRTHTSPMQVRYMVDHEPPLKVVVRGKVYRYEATDATHESMFHQLEGLVVGDGISMADLKGTVAELARGLYGPSAKVRFQPSYYPFVEPGADFAVWWDNPRGESKWLELGGCGMVHPNVFRAVDDLREAAGKPRVYEGKTGFAFGLGPERIAMLKYGIPDIRYFYANDPRVIGQFRGELG.

A Mg(2+)-binding site is contributed by Glu-247.

The protein belongs to the class-II aminoacyl-tRNA synthetase family. Phe-tRNA synthetase alpha subunit type 1 subfamily. In terms of assembly, tetramer of two alpha and two beta subunits. Mg(2+) is required as a cofactor.

The protein resides in the cytoplasm. It carries out the reaction tRNA(Phe) + L-phenylalanine + ATP = L-phenylalanyl-tRNA(Phe) + AMP + diphosphate + H(+). This Deinococcus geothermalis (strain DSM 11300 / CIP 105573 / AG-3a) protein is Phenylalanine--tRNA ligase alpha subunit.